We begin with the raw amino-acid sequence, 185 residues long: UPF0397 protein CPR_1556 (185 aa).

5 consecutive transmembrane segments (helical) span residues 11–31, 44–64, 71–91, 111–131, and 149–169; these read IVAIGIGSAVFMILGRFGSLP, AFLSLMALLYGPLAGFLIGFI, IVFFGSPWISWVFASGIVGLI, IFMFNLIQIIANGVAWFLVAP, and GVIGGISNMITVGVLGTVLIS.

It belongs to the UPF0397 family.

It is found in the cell membrane. The protein is UPF0397 protein CPR_1556 of Clostridium perfringens (strain SM101 / Type A).